A 161-amino-acid polypeptide reads, in one-letter code: Allophycocyanin beta chain (161 aa).

Asn71 is subject to N4-methylasparagine. Position 81 (Cys81) interacts with (2R,3E)-phycocyanobilin.

This sequence belongs to the phycobiliprotein family. As to quaternary structure, heterodimer of an alpha and a beta chain. In terms of processing, contains one covalently linked phycocyanobilin chromophore.

The protein localises to the cellular thylakoid membrane. Functionally, light-harvesting photosynthetic bile pigment-protein from the phycobiliprotein complex. Allophycocyanin has a maximum absorption at approximately 650 nanometers. The chain is Allophycocyanin beta chain (apcB) from Mastigocladus laminosus (Fischerella sp.).